The sequence spans 292 residues: NAD kinase (292 aa).

Asp72 serves as the catalytic Proton acceptor. NAD(+) contacts are provided by residues 72–73 (DG), 146–147 (NE), His157, Arg174, Asp176, and 187–192 (TAYSLS).

The protein belongs to the NAD kinase family. A divalent metal cation is required as a cofactor.

The protein localises to the cytoplasm. It catalyses the reaction NAD(+) + ATP = ADP + NADP(+) + H(+). Functionally, involved in the regulation of the intracellular balance of NAD and NADP, and is a key enzyme in the biosynthesis of NADP. Catalyzes specifically the phosphorylation on 2'-hydroxyl of the adenosine moiety of NAD to yield NADP. The polypeptide is NAD kinase (Shewanella loihica (strain ATCC BAA-1088 / PV-4)).